Reading from the N-terminus, the 330-residue chain is Glycerol-3-phosphate dehydrogenase [NAD(P)+] (330 aa).

Positions 10, 11, 31, and 105 each coordinate NADPH. Sn-glycerol 3-phosphate-binding residues include Lys105, Gly135, and Ser137. Ala139 is an NADPH binding site. Residues Lys190, Asp243, Ser253, Arg254, and Asn255 each contribute to the sn-glycerol 3-phosphate site. Lys190 serves as the catalytic Proton acceptor. Residue Arg254 coordinates NADPH. Residues Val278 and Glu280 each contribute to the NADPH site.

This sequence belongs to the NAD-dependent glycerol-3-phosphate dehydrogenase family.

It is found in the cytoplasm. The catalysed reaction is sn-glycerol 3-phosphate + NAD(+) = dihydroxyacetone phosphate + NADH + H(+). It carries out the reaction sn-glycerol 3-phosphate + NADP(+) = dihydroxyacetone phosphate + NADPH + H(+). The protein operates within membrane lipid metabolism; glycerophospholipid metabolism. Functionally, catalyzes the reduction of the glycolytic intermediate dihydroxyacetone phosphate (DHAP) to sn-glycerol 3-phosphate (G3P), the key precursor for phospholipid synthesis. This is Glycerol-3-phosphate dehydrogenase [NAD(P)+] from Oleidesulfovibrio alaskensis (strain ATCC BAA-1058 / DSM 17464 / G20) (Desulfovibrio alaskensis).